The sequence spans 747 residues: Oxysterol-binding protein-related protein 11 (747 aa).

M1 is subject to N-acetylmethionine. The interval 1-50 is disordered; sequence MQGGEPVSTMKVSESEGKLEGQATAVTPNKNSSCGGGISSSSSSRGGSAK. Phosphoserine is present on S15. T27 bears the Phosphothreonine mark. The PH domain maps to 58 to 155; that stretch reads MENVYGYLMK…WVSRLQICTQ (98 aa). Phosphotyrosine is present on Y62. Residues 158–188 form a disordered region; the sequence is TEAIGKNNPPLKSRSFSLASSSNSPISQRRP. Residues 170-184 are compositionally biased toward low complexity; sequence SRSFSLASSSNSPIS. Phosphoserine is present on residues S172, S174, S177, S181, S184, and S189. The segment covering 689 to 713 has biased composition (basic and acidic residues); that stretch reads EIDKATEHKHTLEERQRTEERHRTE. The disordered stretch occupies residues 689–714; the sequence is EIDKATEHKHTLEERQRTEERHRTET.

The protein belongs to the OSBP family. Heterodimer with OSBPL9. Present at highest levels in ovary, testis, kidney, liver, stomach, brain, and adipose tissue. Strong expression (at protein level) in epithelial cells of kidney tubules, testicular tubules, caecum, and skin. Present at low levels in subcutaneous and visceral adipose tissue (at protein level).

It is found in the late endosome membrane. It localises to the golgi apparatus. The protein resides in the trans-Golgi network membrane. It catalyses the reaction a 1,2-diacyl-sn-glycero-3-phospho-(1D-myo-inositol 4-phosphate)(out) + a 1,2-diacyl-sn-glycero-3-phospho-L-serine(in) = a 1,2-diacyl-sn-glycero-3-phospho-(1D-myo-inositol 4-phosphate)(in) + a 1,2-diacyl-sn-glycero-3-phospho-L-serine(out). In terms of biological role, plays a role in regulating ADIPOQ and FABP4 levels in differentiating adipocytes and is also involved in regulation of adipocyte triglyceride storage. Weakly binds 25-hydroxycholesterol. Interacts with OSBPL9 to function as lipid transfer proteins. Together they form a heterodimer that localizes at the ER-trans-Golgi membrane contact sites, and exchanges phosphatidylserine (1,2-diacyl-sn-glycero-3-phospho-L-serine, PS) for phosphatidylinositol-4-phosphate (1,2-diacyl-sn-glycero-3-phospho-(1D-myo-inositol 4-phosphate), PI(4)P) between the two organelles, a step that is critical for sphingomyelin synthesis in the Golgi complex. This Homo sapiens (Human) protein is Oxysterol-binding protein-related protein 11 (OSBPL11).